Reading from the N-terminus, the 419-residue chain is UDP-N-acetylglucosamine 1-carboxyvinyltransferase (419 aa).

22-23 (KN) is a phosphoenolpyruvate binding site. Arginine 91 is a UDP-N-acetyl-alpha-D-glucosamine binding site. The Proton donor role is filled by cysteine 115. The residue at position 115 (cysteine 115) is a 2-(S-cysteinyl)pyruvic acid O-phosphothioketal. Residues 120 to 124 (RPVDL), 160 to 163 (KVSV), aspartate 305, and valine 327 contribute to the UDP-N-acetyl-alpha-D-glucosamine site.

It belongs to the EPSP synthase family. MurA subfamily.

It is found in the cytoplasm. It catalyses the reaction phosphoenolpyruvate + UDP-N-acetyl-alpha-D-glucosamine = UDP-N-acetyl-3-O-(1-carboxyvinyl)-alpha-D-glucosamine + phosphate. Its pathway is cell wall biogenesis; peptidoglycan biosynthesis. Its function is as follows. Cell wall formation. Adds enolpyruvyl to UDP-N-acetylglucosamine. This chain is UDP-N-acetylglucosamine 1-carboxyvinyltransferase, found in Salmonella schwarzengrund (strain CVM19633).